The chain runs to 244 residues: Small ribosomal subunit protein eS4 (244 aa).

Residues 37–123 (VPLAILLKYY…AKYKFVRIMN (87 aa)) form the S4 RNA-binding domain.

It belongs to the eukaryotic ribosomal protein eS4 family.

This is Small ribosomal subunit protein eS4 (rps4e) from Sulfolobus acidocaldarius (strain ATCC 33909 / DSM 639 / JCM 8929 / NBRC 15157 / NCIMB 11770).